Reading from the N-terminus, the 171-residue chain is Transcriptional repressor NrdR (171 aa).

Residues 3–34 fold into a zinc finger; that stretch reads CPFCGDPNTQVADTRENEGGEVVRRRRRCPKC. The region spanning 49 to 139 is the ATP-cone domain; sequence PHIVKRNGNR…VYRNFADVDE (91 aa). Positions 148 to 171 are disordered; that stretch reads KARPKRNRPAEPPEPTSENDLFRS.

Belongs to the NrdR family. The cofactor is Zn(2+).

Functionally, negatively regulates transcription of bacterial ribonucleotide reductase nrd genes and operons by binding to NrdR-boxes. This is Transcriptional repressor NrdR from Aromatoleum aromaticum (strain DSM 19018 / LMG 30748 / EbN1) (Azoarcus sp. (strain EbN1)).